Consider the following 520-residue polypeptide: Zinc finger and BTB domain-containing protein 45 (520 aa).

Positions 33–96 (CDVTVRIREA…LYSGSLVVAQ (64 aa)) constitute a BTB domain. 2 disordered regions span residues 182–272 (PAPP…GGAG) and 337–372 (FHLG…PDAA). A compositionally biased stretch (acidic residues) spans 206-225 (RGEEDDDEETDEETDAEEGE). The span at 342-363 (PGPPAPTPPTPSGPAPAPPPTF) shows a compositional bias: pro residues. C2H2-type zinc fingers lie at residues 412–434 (YECS…MFIH), 440–462 (HQCA…MVTH), 468–490 (FQCA…MRTH), and 495–517 (APCP…LAAH).

It belongs to the krueppel C2H2-type zinc-finger protein family.

The protein localises to the nucleus. In terms of biological role, may be involved in transcriptional regulation. In the central nervous system, may play a role in glial cell differentiation. The protein is Zinc finger and BTB domain-containing protein 45 of Mus musculus (Mouse).